Consider the following 281-residue polypeptide: NAD kinase (281 aa).

The active-site Proton acceptor is aspartate 66. NAD(+)-binding positions include 66–67 (DG), 137–138 (ND), arginine 148, arginine 165, aspartate 167, and 178–183 (TAYSMS).

It belongs to the NAD kinase family. Requires a divalent metal cation as cofactor.

Its subcellular location is the cytoplasm. It carries out the reaction NAD(+) + ATP = ADP + NADP(+) + H(+). Its function is as follows. Involved in the regulation of the intracellular balance of NAD and NADP, and is a key enzyme in the biosynthesis of NADP. Catalyzes specifically the phosphorylation on 2'-hydroxyl of the adenosine moiety of NAD to yield NADP. The polypeptide is NAD kinase (Chlorobium phaeovibrioides (strain DSM 265 / 1930) (Prosthecochloris vibrioformis (strain DSM 265))).